The sequence spans 550 residues: Natural resistance-associated macrophage protein 1 (550 aa).

Positions Met-1 to Ile-45 are disordered. Topologically, residues Met-1–Leu-58 are cytoplasmic. Residues Ser-11 to Ser-23 are compositionally biased toward low complexity. A helical transmembrane segment spans residues Trp-59–Gly-76. Residues Asn-77 to Gly-85 are Extracellular-facing. A helical transmembrane segment spans residues Ala-86–Leu-105. Residues Cys-106 to Glu-142 are Cytoplasmic-facing. The helical transmembrane segment at Leu-143–Leu-163 threads the bilayer. The Extracellular portion of the chain corresponds to Ser-164–Arg-167. Residues Ile-168 to Leu-187 form a helical membrane-spanning segment. Over Asp-188–Glu-196 the chain is Cytoplasmic. The chain crosses the membrane as a helical span at residues Ala-197 to Ala-217. Topologically, residues Arg-218 to Glu-240 are extracellular. The helical transmembrane segment at Leu-241 to Leu-259 threads the bilayer. Residues His-260–Glu-287 are Cytoplasmic-facing. The helical transmembrane segment at Ala-288–Gly-307 threads the bilayer. The Extracellular segment spans residues Gln-308–Gly-349. N-linked (GlcNAc...) asparagine glycans are attached at residues Asn-324 and Asn-338. A helical membrane pass occupies residues Val-350–Leu-369. The Cytoplasmic portion of the chain corresponds to Ala-370–Arg-400. Residues Val-401–Phe-418 form a helical membrane-spanning segment. Residues Arg-419–Asp-429 lie on the Extracellular side of the membrane. The chain crosses the membrane as a helical span at residues Leu-430–Thr-450. Residues Ser-451 to Lys-466 are Cytoplasmic-facing. Residues Val-467–Leu-488 form a helical membrane-spanning segment. The Extracellular portion of the chain corresponds to Pro-489 to Tyr-496. A helical transmembrane segment spans residues Phe-497 to Trp-516. Residues Thr-517–Gly-550 are Cytoplasmic-facing.

This sequence belongs to the NRAMP family. As to expression, macrophages; peripheral blood leukocytes, lung, spleen and liver.

It is found in the late endosome membrane. Its subcellular location is the lysosome membrane. It catalyses the reaction Zn(2+)(in) + H(+)(out) = Zn(2+)(out) + H(+)(in). The catalysed reaction is Fe(2+)(in) + H(+)(out) = Fe(2+)(out) + H(+)(in). It carries out the reaction Mn(2+)(in) + H(+)(out) = Mn(2+)(out) + H(+)(in). In terms of biological role, macrophage-specific antiporter that fluxes metal ions in either direction against a proton gradient. Localized to late endosomal lysosomal membranes, delivers bivalent cations from the cytosol into these acidic compartments where they may directly affect antimicrobial activity. Involved in iron metabolism and host natural resistance to infection with intracellular parasites. Pathogen resistance involves sequestration of Fe(2+) and Mn(2+), cofactors of both prokaryotic and eukaryotic catalases and superoxide dismutases, not only to protect the macrophage against its own generation of reactive oxygen species, but to deny the cations to the pathogen for synthesis of its protective enzymes. In Homo sapiens (Human), this protein is Natural resistance-associated macrophage protein 1.